A 209-amino-acid chain; its full sequence is Thiamine-phosphate synthase (209 aa).

4-amino-2-methyl-5-(diphosphooxymethyl)pyrimidine is bound by residues 38–42 and N70; that span reads QYRDK. Residues D71 and D89 each contribute to the Mg(2+) site. T108 provides a ligand contact to 4-amino-2-methyl-5-(diphosphooxymethyl)pyrimidine. 135–137 is a binding site for 2-[(2R,5Z)-2-carboxy-4-methylthiazol-5(2H)-ylidene]ethyl phosphate; it reads SNT. K138 lines the 4-amino-2-methyl-5-(diphosphooxymethyl)pyrimidine pocket. Position 165 (G165) interacts with 2-[(2R,5Z)-2-carboxy-4-methylthiazol-5(2H)-ylidene]ethyl phosphate.

Belongs to the thiamine-phosphate synthase family. Requires Mg(2+) as cofactor.

The enzyme catalyses 2-[(2R,5Z)-2-carboxy-4-methylthiazol-5(2H)-ylidene]ethyl phosphate + 4-amino-2-methyl-5-(diphosphooxymethyl)pyrimidine + 2 H(+) = thiamine phosphate + CO2 + diphosphate. It carries out the reaction 2-(2-carboxy-4-methylthiazol-5-yl)ethyl phosphate + 4-amino-2-methyl-5-(diphosphooxymethyl)pyrimidine + 2 H(+) = thiamine phosphate + CO2 + diphosphate. It catalyses the reaction 4-methyl-5-(2-phosphooxyethyl)-thiazole + 4-amino-2-methyl-5-(diphosphooxymethyl)pyrimidine + H(+) = thiamine phosphate + diphosphate. It functions in the pathway cofactor biosynthesis; thiamine diphosphate biosynthesis; thiamine phosphate from 4-amino-2-methyl-5-diphosphomethylpyrimidine and 4-methyl-5-(2-phosphoethyl)-thiazole: step 1/1. Its function is as follows. Condenses 4-methyl-5-(beta-hydroxyethyl)thiazole monophosphate (THZ-P) and 2-methyl-4-amino-5-hydroxymethyl pyrimidine pyrophosphate (HMP-PP) to form thiamine monophosphate (TMP). This chain is Thiamine-phosphate synthase, found in Ectopseudomonas mendocina (strain ymp) (Pseudomonas mendocina).